Reading from the N-terminus, the 587-residue chain is Probable terpene synthase 12 (587 aa).

3 residues coordinate Mg(2+): Asp338, Asp342, and Glu489. The DDXXD motif signature appears at 338 to 342; that stretch reads DDVYD.

This sequence belongs to the terpene synthase family. Mg(2+) serves as cofactor.

Probable sesquiterpene synthase. The sequence is that of Probable terpene synthase 12 (TPS12) from Ricinus communis (Castor bean).